The sequence spans 140 residues: Histone H2B (140 aa).

Over residues 1–10 the composition is skewed to basic and acidic residues; the sequence is MPPKAAEKKP. A disordered region spans residues 1 to 48; the sequence is MPPKAAEKKPSTGGKAPAGKAPAEKKEAGKKTAAAASGEKKKRGKTRK. An N6-acetyllysine; alternate mark is found at Lys8 and Lys9. Residues Lys8 and Lys9 each participate in a glycyl lysine isopeptide (Lys-Gly) (interchain with G-Cter in SUMO); alternate cross-link. A compositionally biased stretch (low complexity) spans 11-21; the sequence is STGGKAPAGKA. Residue Lys15 is modified to N6-acetyllysine. Lys25 carries the post-translational modification N6-acetyllysine; alternate. Lys25 participates in a covalent cross-link: Glycyl lysine isopeptide (Lys-Gly) (interchain with G-Cter in SUMO); alternate. Lys26 participates in a covalent cross-link: Glycyl lysine isopeptide (Lys-Gly) (interchain with G-Cter in SUMO). Lys134 participates in a covalent cross-link: Glycyl lysine isopeptide (Lys-Gly) (interchain with G-Cter in ubiquitin).

This sequence belongs to the histone H2B family. The nucleosome is a histone octamer containing two molecules each of H2A, H2B, H3 and H4 assembled in one H3-H4 heterotetramer and two H2A-H2B heterodimers. The octamer wraps approximately 147 bp of DNA. In terms of processing, monoubiquitinated by the ubc2-bre1 complex to form H2BK123ub1. H2BK123ub1 gives a specific tag for epigenetic transcriptional activation and is also prerequisite for H3K4me and H3K79me formation. H2BK123ub1 also modulates the formation of double-strand breaks during meiosis and is a prerequisite for DNA-damage checkpoint activation. Post-translationally, acetylated by gcn5 to form H2BK11ac and H2BK16ac. H2BK16ac can also be formed by esa1. Acetylation of N-terminal lysines and particularly formation of H2BK11acK16ac has a positive effect on transcription. Sumoylation to form H2BK6su or H2BK7su, and probably also H2BK16su or H2BK17su, occurs preferentially near the telomeres and represses gene transcription.

It is found in the nucleus. The protein localises to the chromosome. Functionally, core component of nucleosome. Nucleosomes wrap and compact DNA into chromatin, limiting DNA accessibility to the cellular machineries which require DNA as a template. Histones thereby play a central role in transcription regulation, DNA repair, DNA replication and chromosomal stability. DNA accessibility is regulated via a complex set of post-translational modifications of histones, also called histone code, and nucleosome remodeling. The sequence is that of Histone H2B (htbA) from Emericella nidulans (strain FGSC A4 / ATCC 38163 / CBS 112.46 / NRRL 194 / M139) (Aspergillus nidulans).